Here is a 306-residue protein sequence, read N- to C-terminus: tRNA pseudouridine synthase B (306 aa).

Asp-48 acts as the Nucleophile in catalysis.

The protein belongs to the pseudouridine synthase TruB family. Type 1 subfamily.

It carries out the reaction uridine(55) in tRNA = pseudouridine(55) in tRNA. Its function is as follows. Responsible for synthesis of pseudouridine from uracil-55 in the psi GC loop of transfer RNAs. The sequence is that of tRNA pseudouridine synthase B from Ectopseudomonas mendocina (strain ymp) (Pseudomonas mendocina).